Consider the following 143-residue polypeptide: Deoxyuridine 5'-triphosphate nucleotidohydrolase (143 aa).

Positions 65, 78, 132, and 138 each coordinate dUMP.

Belongs to the dUTPase family. As to quaternary structure, homotrimer. The cofactor is Mg(2+).

The catalysed reaction is dUTP + H2O = dUMP + diphosphate + H(+). It participates in pyrimidine metabolism; dUMP biosynthesis; dUMP from dCTP (dUTP route): step 2/2. In terms of biological role, involved in nucleotide metabolism via production of dUMP, the immediate precursor of thymidine nucleotides, and decreases the intracellular concentration of dUTP so that uracil cannot be incorporated into DNA. The chain is Deoxyuridine 5'-triphosphate nucleotidohydrolase (DUT1) from Antonospora locustae (Microsporidian parasite).